A 383-amino-acid polypeptide reads, in one-letter code: Putative transcription factor 282R (383 aa).

It belongs to the IIV-6 282R family.

Its function is as follows. Transcription activation. The sequence is that of Putative transcription factor 282R from Acheta domesticus (House cricket).